The primary structure comprises 979 residues: MSASRRESEPKEAETSPEAGGAASDRRRSKTSRACDQCREKKTRCDFSDERPICSACQRMGKTCTFERVPMKRGPTKGYTRNSEPPEGFDTSRRGSRKRSSSDVFKGDAGRPRADPVSLPPLAQYLPQSGSQPRLQPLLAPGAQPQQQFWKVPYYEYQHQRRGSIDSLGSDVSNRNGSEQLAYLPSNASSGSQFYPASQAQYASQLPSDVEGANPEDCRGSLSLPAIQKFQQPPSGYYLQYPYSQFSMLPQQQQQQQQQNAQQSYFTSQYVPPAAPPGAEHFKEFDEGFHSRKGSDVSVAVSPSSPVQVTRTQQAGLNSESRDTNTATAVSPKPLPKPSKPQMQTERSSSKSDGNHNGPRKQKRKNSNRNKPGSQSSIESIASSSHASIIYGKIPDKQLIDIYFEFIHPNFPVIPINKETLTDDLLLVNTQPISPVHELNTYILHWFRNSLELLVRVALKKPSGSGQAYSDGAVDILDSQATFINALNECFQRIVDIHPGLRENEKLLSLKTKFIYLATFSILNYILAFVGYDNSFVLGMSVTIYNECKLYRYLMYDELPSNDTEASENEDEAGAGDAHASGTPERGKSAKHDLGHQVLFKRLYVLLVVFDSLQSCAFGVPKLISVPLAELTEETFKFSTGKWCVERDPQRFETIRQSLVLGQVLSWLSISRKSVRRNSLQAAPQDASWKDEKSDSVSSSLFAKFLVQKHEMMEDFLLLAPLENSSHLLTFDLLSKSSTAICGLISSMHRLLALLMKINPTNSVDPNNRPPLRQGDFVHTDTEIQSESSNPPAATAAPDSCDADKFDVYRKLLGLNGGQERHVAQGTISPFVISIVVEIRNVLELVKHLPTSIIGVVVNLLPNGEGENYQKRSHRLVMSLSNAMNELVQITSLISLLKPFKMFDHTLRSNRPSAKVSTKLLRQKFAPESVKTPSSQPPSSSPGPNSDGSNNTSLSQNTVMHAILDAAWDLMDGEELGWL.

3 stretches are compositionally biased toward basic and acidic residues: residues 1–14, 36–47, and 105–114; these read MSAS…KEAE, DQCREKKTRCDF, and FKGDAGRPRA. Disordered regions lie at residues 1–47, 65–142, 165–219, 249–380, 563–590, and 926–954; these read MSAS…RCDF, TFER…LAPG, IDSL…EDCR, LPQQ…SIES, DTEA…GKSA, and APES…NTSL. The segment at residues 35–64 is a DNA-binding region (zn(2)-C6 fungal-type); that stretch reads CDQCREKKTRCDFSDERPICSACQRMGKTC. A compositionally biased stretch (low complexity) spans 132–142; that stretch reads QPRLQPLLAPG. Composition is skewed to polar residues over residues 170–179 and 186–207; these read SDVSNRNGSE and SNAS…SQLP. The segment covering 251–263 has biased composition (low complexity); it reads QQQQQQQQQNAQQ. Residues 280-295 show a composition bias toward basic and acidic residues; that stretch reads EHFKEFDEGFHSRKGS. The span at 296 to 309 shows a compositional bias: low complexity; it reads DVSVAVSPSSPVQV. Residues 310 to 329 show a composition bias toward polar residues; that stretch reads TRTQQAGLNSESRDTNTATA. Positions 358-368 are enriched in basic residues; the sequence is GPRKQKRKNSN. Over residues 369–380 the composition is skewed to low complexity; sequence RNKPGSQSSIES. The span at 565–574 shows a compositional bias: acidic residues; it reads EASENEDEAG. Positions 942 to 953 are enriched in low complexity; it reads PGPNSDGSNNTS.

This sequence belongs to the EDS1/RGT1 family.

It localises to the nucleus. Its subcellular location is the cytoplasm. In terms of biological role, glucose-responsive transcription factor that regulates expression of several glucose transporter (HXT) genes in response to glucose. In the absence of glucose, it functions as a transcriptional repressor, whereas high concentrations of glucose cause it to function as a transcriptional activator. In cells growing on low levels of glucose, has a neutral role, neither repressing nor activating transcription. The polypeptide is Glucose transport transcription regulator RGT1 (RGT1) (Lachancea thermotolerans (strain ATCC 56472 / CBS 6340 / NRRL Y-8284) (Yeast)).